Here is a 244-residue protein sequence, read N- to C-terminus: Flavin-dependent thymidylate synthase (244 aa).

One can recognise a ThyX domain in the interval 2–207 (VRVTLVNYTK…DIRPIIKWAK (206 aa)). FAD-binding positions include Ser56, 80–82 (RHR), and Gln88. DUMP contacts are provided by residues 77–80 (QLVR), 88–92 (QQSQR), and Arg146. Positions 80 to 90 (RHRIASYTQQS) match the ThyX motif motif. FAD is bound by residues 162–164 (NLR) and His168. Residue Arg173 coordinates dUMP. Arg173 serves as the catalytic Involved in ionization of N3 of dUMP, leading to its activation.

The protein belongs to the thymidylate synthase ThyX family. In terms of assembly, homotetramer. FAD serves as cofactor.

It carries out the reaction dUMP + (6R)-5,10-methylene-5,6,7,8-tetrahydrofolate + NADPH + H(+) = dTMP + (6S)-5,6,7,8-tetrahydrofolate + NADP(+). It participates in pyrimidine metabolism; dTTP biosynthesis. Its function is as follows. Catalyzes the reductive methylation of 2'-deoxyuridine-5'-monophosphate (dUMP) to 2'-deoxythymidine-5'-monophosphate (dTMP) while utilizing 5,10-methylenetetrahydrofolate (mTHF) as the methyl donor, and NADPH and FADH(2) as the reductant. This Pyrococcus furiosus (strain ATCC 43587 / DSM 3638 / JCM 8422 / Vc1) protein is Flavin-dependent thymidylate synthase.